Here is a 457-residue protein sequence, read N- to C-terminus: Exodeoxyribonuclease 7 large subunit (457 aa).

This sequence belongs to the XseA family. In terms of assembly, heterooligomer composed of large and small subunits.

It is found in the cytoplasm. It carries out the reaction Exonucleolytic cleavage in either 5'- to 3'- or 3'- to 5'-direction to yield nucleoside 5'-phosphates.. In terms of biological role, bidirectionally degrades single-stranded DNA into large acid-insoluble oligonucleotides, which are then degraded further into small acid-soluble oligonucleotides. This chain is Exodeoxyribonuclease 7 large subunit, found in Escherichia coli O127:H6 (strain E2348/69 / EPEC).